A 186-amino-acid polypeptide reads, in one-letter code: Putative thiamine-phosphate synthase 2 (186 aa).

4-amino-2-methyl-5-(diphosphooxymethyl)pyrimidine contacts are provided by residues 35–39 and Asn67; that span reads QLREK. Mg(2+) is bound at residue Glu68. A 4-amino-2-methyl-5-(diphosphooxymethyl)pyrimidine-binding site is contributed by Ser105. 131 to 133 contributes to the 2-[(2R,5Z)-2-carboxy-4-methylthiazol-5(2H)-ylidene]ethyl phosphate binding site; the sequence is TSS. Position 134 (His134) interacts with 4-amino-2-methyl-5-(diphosphooxymethyl)pyrimidine. Residues Gly161 and 181–182 contribute to the 2-[(2R,5Z)-2-carboxy-4-methylthiazol-5(2H)-ylidene]ethyl phosphate site; that span reads IS.

This sequence belongs to the thiamine-phosphate synthase family. Requires Mg(2+) as cofactor.

The enzyme catalyses 2-[(2R,5Z)-2-carboxy-4-methylthiazol-5(2H)-ylidene]ethyl phosphate + 4-amino-2-methyl-5-(diphosphooxymethyl)pyrimidine + 2 H(+) = thiamine phosphate + CO2 + diphosphate. The catalysed reaction is 2-(2-carboxy-4-methylthiazol-5-yl)ethyl phosphate + 4-amino-2-methyl-5-(diphosphooxymethyl)pyrimidine + 2 H(+) = thiamine phosphate + CO2 + diphosphate. It catalyses the reaction 4-methyl-5-(2-phosphooxyethyl)-thiazole + 4-amino-2-methyl-5-(diphosphooxymethyl)pyrimidine + H(+) = thiamine phosphate + diphosphate. Its pathway is cofactor biosynthesis; thiamine diphosphate biosynthesis; thiamine phosphate from 4-amino-2-methyl-5-diphosphomethylpyrimidine and 4-methyl-5-(2-phosphoethyl)-thiazole: step 1/1. Condenses 4-methyl-5-(beta-hydroxyethyl)thiazole monophosphate (THZ-P) and 2-methyl-4-amino-5-hydroxymethyl pyrimidine pyrophosphate (HMP-PP) to form thiamine monophosphate (TMP). In Aquifex aeolicus (strain VF5), this protein is Putative thiamine-phosphate synthase 2 (thiE2).